The following is a 629-amino-acid chain: Pentatricopeptide repeat-containing protein At1g63150 (629 aa).

16 PPR repeats span residues A46–P81, S82–H116, D117–P151, D152–P186, D187–P221, D222–A256, N257–P291, N292–P326, N327–P361, D362–P396, N397–G431, N432–T466, D467–L501, N502–K532, D534–P568, and N569–G603.

The protein belongs to the PPR family. P subfamily.

This Arabidopsis thaliana (Mouse-ear cress) protein is Pentatricopeptide repeat-containing protein At1g63150.